The sequence spans 388 residues: MRYLTAGESHGPGLTTIIEGLPAGMPLLAEDVNKELKRRQGGHGRGARMRIEKDQVQITAGIRHGKTLGAPVAMFVENKDWKHWETVMSIEPVPEKNEKSRRVSRPRPGHADLVGGMKYGHNDMRNVLERSSARETTVRVAAGAVAKKLLHELGIEVAGHVLEIGGTRANLTRDYAVSEIQETSEASPVRCLDGVAAEEMMQKIDDAKKNGDTIGGIVEVVVGGVPAGLGSYVQWDKKLDAKIARAIVSINAFKGAEFGVGFEAARKPGSEVMDEILWSKEDGYTRRTNNLGGFEGGMTNGMPIVVRGVMKPIPTLYKPLQSVDIDSKETFNASVERSDSCAVPAASVVAEAVVAWEVAVAVLEKFDGDRFDTLKKHVEEHRNLTKEF.

Residues R39 and R45 each coordinate NADP(+). The tract at residues 95-118 is disordered; sequence EKNEKSRRVSRPRPGHADLVGGMK. FMN-binding positions include 130–132, 251–252, G296, 311–315, and R337; these read RSS, NA, and KPIPT.

Belongs to the chorismate synthase family. As to quaternary structure, homotetramer. The cofactor is FMNH2.

The enzyme catalyses 5-O-(1-carboxyvinyl)-3-phosphoshikimate = chorismate + phosphate. Its pathway is metabolic intermediate biosynthesis; chorismate biosynthesis; chorismate from D-erythrose 4-phosphate and phosphoenolpyruvate: step 7/7. Its function is as follows. Catalyzes the anti-1,4-elimination of the C-3 phosphate and the C-6 proR hydrogen from 5-enolpyruvylshikimate-3-phosphate (EPSP) to yield chorismate, which is the branch point compound that serves as the starting substrate for the three terminal pathways of aromatic amino acid biosynthesis. This reaction introduces a second double bond into the aromatic ring system. This is Chorismate synthase from Listeria monocytogenes serotype 4b (strain F2365).